Consider the following 322-residue polypeptide: Cytochrome c biogenesis protein CcsA (322 aa).

Helical transmembrane passes span 2-22 (LFAT…SIVI), 44-64 (GMIA…LSSG), 68-88 (LSNL…LHTI), 143-163 (MLLS…ILII), 226-246 (VISL…VWAN), 260-274 (TWAF…IYLH), and 289-309 (VASI…LLGI).

It belongs to the CcmF/CycK/Ccl1/NrfE/CcsA family. In terms of assembly, may interact with Ccs1.

The protein localises to the plastid. It is found in the chloroplast thylakoid membrane. Required during biogenesis of c-type cytochromes (cytochrome c6 and cytochrome f) at the step of heme attachment. The protein is Cytochrome c biogenesis protein CcsA of Brachypodium distachyon (Purple false brome).